We begin with the raw amino-acid sequence, 342 residues long: Uroporphyrinogen decarboxylase (342 aa).

Residues R21–R25, D71, Y148, S203, and H316 each bind substrate.

It belongs to the uroporphyrinogen decarboxylase family. As to quaternary structure, homodimer.

The protein localises to the cytoplasm. The catalysed reaction is uroporphyrinogen III + 4 H(+) = coproporphyrinogen III + 4 CO2. It participates in porphyrin-containing compound metabolism; protoporphyrin-IX biosynthesis; coproporphyrinogen-III from 5-aminolevulinate: step 4/4. Functionally, catalyzes the decarboxylation of four acetate groups of uroporphyrinogen-III to yield coproporphyrinogen-III. This is Uroporphyrinogen decarboxylase from Campylobacter curvus (strain 525.92).